The primary structure comprises 541 residues: ATP synthase subunit alpha (541 aa).

Residue 173–180 (GDRQTGKT) participates in ATP binding. Over residues 517 to 527 (GIEPGVEEHES) the composition is skewed to basic and acidic residues. The tract at residues 517–541 (GIEPGVEEHESLGATAVNQETIVKK) is disordered. The span at 532-541 (AVNQETIVKK) shows a compositional bias: polar residues.

The protein belongs to the ATPase alpha/beta chains family. F-type ATPases have 2 components, CF(1) - the catalytic core - and CF(0) - the membrane proton channel. CF(1) has five subunits: alpha(3), beta(3), gamma(1), delta(1), epsilon(1). CF(0) has three main subunits: a(1), b(2) and c(9-12). The alpha and beta chains form an alternating ring which encloses part of the gamma chain. CF(1) is attached to CF(0) by a central stalk formed by the gamma and epsilon chains, while a peripheral stalk is formed by the delta and b chains.

The protein localises to the cell membrane. It catalyses the reaction ATP + H2O + 4 H(+)(in) = ADP + phosphate + 5 H(+)(out). Produces ATP from ADP in the presence of a proton gradient across the membrane. The alpha chain is a regulatory subunit. The polypeptide is ATP synthase subunit alpha (Kocuria rhizophila (strain ATCC 9341 / DSM 348 / NBRC 103217 / DC2201)).